A 378-amino-acid chain; its full sequence is T-cell immunoglobulin and mucin domain-containing protein 4 (378 aa).

The N-terminal stretch at 1 to 24 (MSKEPLILWLMIEFWWLYLTPVTS) is a signal peptide. One can recognise an Ig-like V-type domain in the interval 25 to 126 (ETVVTEVLGH…PGWFNDVKIN (102 aa)). The Extracellular portion of the chain corresponds to 25–314 (ETVVTEVLGH…SMKNEMPISQ (290 aa)). Disulfide bonds link C40/C112, C53/C64, and C59/C111. 2 disordered regions span residues 136–160 (TTTH…TRQM) and 269–304 (WKTS…GIPM). A compositionally biased stretch (polar residues) spans 269–297 (WKTSDSVSSPQPGASDTAVPEQNKTTKTG). Residue N291 is glycosylated (N-linked (GlcNAc...) asparagine). The chain crosses the membrane as a helical span at residues 315 to 335 (LLMIIAPSLGFVLFALFVAFL). Topologically, residues 336-378 (LRGKLMETYCSQKHTRLDYIGDSKNVLNDVQHGREDEDGLFTL) are cytoplasmic. S358 bears the Phosphoserine mark.

The protein belongs to the immunoglobulin superfamily. TIM family. As to quaternary structure, interacts with MERTK; this interaction enhances TIMD4-mediated efferocytosis. Interacts with EPHA2.

The protein resides in the cell membrane. It localises to the secreted. It is found in the extracellular exosome. Its function is as follows. Phosphatidylserine receptor that plays different role in immune response including phagocytosis of apoptotic cells and T-cell regulation. Controls T-cell activation in a bimodal fashion, decreasing the activation of naive T-cells by inducing cell cycle arrest, while increasing proliferation of activated T-cells by activating AKT1 and ERK1/2 phosphorylations and subsequent signaling pathways. Also plays a role in efferocytosis which is the process by which apoptotic cells are removed by phagocytic cells. Mechanistically, promotes the engulfment of apoptotic cells or exogenous particles by securing them to phagocytes through direct binding to phosphatidylserine present on apoptotic cells, while other engulfment receptors such as MERTK efficiently recognize apoptotic cells and mediate their ingestion. Additionally, promotes autophagy process by suppressing NLRP3 inflammasome activity via activation of LKB1/PRKAA1 pathway in a phosphatidylserine-dependent mechanism. (Microbial infection) Plays a positive role in exosome-mediated trafficking of HIV-1 virus and its entry into immune cells. The polypeptide is T-cell immunoglobulin and mucin domain-containing protein 4 (TIMD4) (Homo sapiens (Human)).